The following is a 196-amino-acid chain: Guanylate kinase (196 aa).

The 185-residue stretch at 7 to 191 folds into the Guanylate kinase-like domain; the sequence is RNIVLLVGPS…AAEEIEKIIL (185 aa). 14 to 21 is an ATP binding site; it reads GPSGVGKG.

This sequence belongs to the guanylate kinase family.

It is found in the cytoplasm. The catalysed reaction is GMP + ATP = GDP + ADP. Essential for recycling GMP and indirectly, cGMP. The polypeptide is Guanylate kinase (Mycoplasmopsis pulmonis (strain UAB CTIP) (Mycoplasma pulmonis)).